We begin with the raw amino-acid sequence, 253 residues long: 3-deoxy-manno-octulosonate cytidylyltransferase (253 aa).

Belongs to the KdsB family.

It is found in the cytoplasm. It carries out the reaction 3-deoxy-alpha-D-manno-oct-2-ulosonate + CTP = CMP-3-deoxy-beta-D-manno-octulosonate + diphosphate. It participates in nucleotide-sugar biosynthesis; CMP-3-deoxy-D-manno-octulosonate biosynthesis; CMP-3-deoxy-D-manno-octulosonate from 3-deoxy-D-manno-octulosonate and CTP: step 1/1. The protein operates within bacterial outer membrane biogenesis; lipopolysaccharide biosynthesis. Functionally, activates KDO (a required 8-carbon sugar) for incorporation into bacterial lipopolysaccharide in Gram-negative bacteria. The protein is 3-deoxy-manno-octulosonate cytidylyltransferase of Haemophilus ducreyi (strain 35000HP / ATCC 700724).